The sequence spans 974 residues: Probable proton ATPase 1B (974 aa).

Residues 1–23 show a composition bias toward basic and acidic residues; that stretch reads MSSKKYELDAAAFEDKPESHSDA. Residues 1 to 61 form a disordered region; sequence MSSKKYELDA…ATDLLPPSKG (61 aa). 4 helical membrane-spanning segments follow: residues 93-112, 118-137, 265-286, and 295-321; these read GLWG…EFAL, GAIL…YETI, VMLA…YLLA, and ALQF…TLAV. D351 acts as the 4-aspartylphosphate intermediate in catalysis. 6 consecutive transmembrane segments (helical) span residues 631-651, 662-684, 698-712, 738-761, 813-840, and 869-887; these read AAAD…AMLV, FLTY…CFSL, FFHL…ITLL, VVFV…LWIG, FFFY…AASF, and VWIY…KVLA. The disordered stretch occupies residues 952–974; that stretch reads REDTHVLNESTSPVNAFSPKVKK.

This sequence belongs to the cation transport ATPase (P-type) (TC 3.A.3) family. Type IIIA subfamily.

It is found in the membrane. The enzyme catalyses ATP + H2O + H(+)(in) = ADP + phosphate + 2 H(+)(out). In Leishmania donovani, this protein is Probable proton ATPase 1B (H1B).